We begin with the raw amino-acid sequence, 471 residues long: Tyrosine--tRNA ligase (471 aa).

Tyr-41 is an L-tyrosine binding site. The 'HIGH' region motif lies at 46 to 55 (PTAPSLHVGN). Tyr-176 and Gln-180 together coordinate L-tyrosine. The short motif at 236–240 (KFGKT) is the 'KMSKS' region element. Residue Lys-239 participates in ATP binding. The region spanning 403–471 (DLITHILQKV…GKKHLAAVFY (69 aa)) is the S4 RNA-binding domain.

This sequence belongs to the class-I aminoacyl-tRNA synthetase family. TyrS type 1 subfamily. As to quaternary structure, homodimer.

It is found in the cytoplasm. It carries out the reaction tRNA(Tyr) + L-tyrosine + ATP = L-tyrosyl-tRNA(Tyr) + AMP + diphosphate + H(+). Functionally, catalyzes the attachment of tyrosine to tRNA(Tyr) in a two-step reaction: tyrosine is first activated by ATP to form Tyr-AMP and then transferred to the acceptor end of tRNA(Tyr). The chain is Tyrosine--tRNA ligase from Tropheryma whipplei (strain Twist) (Whipple's bacillus).